The chain runs to 88 residues: Elongation factor 1-beta (88 aa).

Belongs to the EF-1-beta/EF-1-delta family.

Functionally, promotes the exchange of GDP for GTP in EF-1-alpha/GDP, thus allowing the regeneration of EF-1-alpha/GTP that could then be used to form the ternary complex EF-1-alpha/GTP/AAtRNA. This chain is Elongation factor 1-beta (ef1b), found in Thermoplasma volcanium (strain ATCC 51530 / DSM 4299 / JCM 9571 / NBRC 15438 / GSS1).